Reading from the N-terminus, the 203-residue chain is Outer-membrane lipoprotein carrier protein (203 aa).

Residues 1–21 form the signal peptide; that stretch reads MKKLLVACCLLSGFASTSVLA.

The protein belongs to the LolA family. In terms of assembly, monomer.

The protein resides in the periplasm. Its function is as follows. Participates in the translocation of lipoproteins from the inner membrane to the outer membrane. Only forms a complex with a lipoprotein if the residue after the N-terminal Cys is not an aspartate (The Asp acts as a targeting signal to indicate that the lipoprotein should stay in the inner membrane). The chain is Outer-membrane lipoprotein carrier protein from Serratia proteamaculans (strain 568).